The following is a 570-amino-acid chain: MSAEEADKTTTTDASAGDEEEEWLYGDEGESKETEEEEAKLTAAISATSTTPVAEDAPTTTNNSSDSATPPTTTTTTGNGVASQEEAPGEDEDSESDSDDDDDDVRVTIGDIKTGAPQYTGYGGTPVNLNIKSAGSRAYGAGAKVKGVDLEAPGSINGVPVLEADMESFEEKPWRKPGADLSDYFNYGFNEDTWKAYCEKQKRLRMGLDVLNIGSTTSKISVQQGRTGNNEKEITIPAHASKAEFTSPSNLYKAGLNQGRISPPHWAGPPSQDLSYYTKTPGTIDVIGGQTATISRVEGRRRHNLEGNNIQVISEHSSSEVEPEVQKMPPPFFPPGPLPPNIPPPPFLPPPVSQAPPLIPPHRMPITVPPPNFPPPTGGPPPSLIPTLDNSGHPGGYDGRPVAPYPFPTGGFPPPMQGAVNPWPGLMENPKQWDYYPRRDKEREKERERERQRDRGHERDHSPNAGPYNSMAMCSDEERYRSYRDYGDRGYERHRERASREKEERHGGRRHREKEEGRHKSSRSSSRRRHESEEGDSHRRHKHKKSKRSKEGKEPSEERSADQENQEAME.

Over residues 1-10 (MSAEEADKTT) the composition is skewed to basic and acidic residues. Residues 1–107 (MSAEEADKTT…SDDDDDDVRV (107 aa)) form a disordered region. Residues 16–38 (AGDEEEEWLYGDEGESKETEEEE) show a composition bias toward acidic residues. The segment covering 56-77 (DAPTTTNNSSDSATPPTTTTTT) has biased composition (low complexity). Over residues 87–104 (APGEDEDSESDSDDDDDD) the composition is skewed to acidic residues. Thr125 is subject to Phosphothreonine. Ser247 carries the phosphoserine modification. Disordered regions lie at residues 300-328 (RRRHNLEGNNIQVISEHSSSEVEPEVQKM), 371-400 (PNFPPPTGGPPPSLIPTLDNSGHPGGYDGR), and 418-570 (GAVN…EAME). Residues 371–384 (PNFPPPTGGPPPSL) show a composition bias toward pro residues. Composition is skewed to basic and acidic residues over residues 436 to 462 (YPRRDKEREKERERERQRDRGHERDHS) and 476 to 506 (DEERYRSYRDYGDRGYERHRERASREKEERH). Basic residues-rich tracts occupy residues 520-529 (KSSRSSSRRR) and 538-548 (HRRHKHKKSKR). Positions 549–562 (SKEGKEPSEERSAD) are enriched in basic and acidic residues.

It belongs to the FIP1 family.

The protein localises to the nucleus. Its function is as follows. Involved in mRNA processing. This is Pre-mRNA 3'-end-processing factor FIP1 (fip1l1) from Danio rerio (Zebrafish).